We begin with the raw amino-acid sequence, 251 residues long: MNTSLTQLCFWALQILLMSNLLLWEDVVSVPTIGSGSGVSEMLTEDLFDDAIILSQHINSLAIETRRIFLSNNFSSDMFITFTLQFNRHDEFVVNGLNSCHTLPLKSPKTEKEAKRISLPDFMNMILSILRAWDNPLHHMETELKSMPGAPFAILARVKDIEVKNKILLDRIMKIAKKVKYGFEENEVYPAWSELASLQSANEESRFFALYKLSYCLFVDTDKVEHYLKHLKCRYFDGYMCQDSVNQINLL.

An N-terminal signal peptide occupies residues 1 to 29; sequence MNTSLTQLCFWALQILLMSNLLLWEDVVS. N-linked (GlcNAc...) asparagine glycans are attached at residues asparagine 2 and asparagine 73. 2 disulfides stabilise this stretch: cysteine 100/cysteine 216 and cysteine 233/cysteine 241.

The protein belongs to the somatotropin/prolactin family. In terms of tissue distribution, expression restricted to placenta. Abundantly expressed in trophoblast cells of the junctional zone and trophoblasts migrating into the mesometrial decidua.

It is found in the secreted. The chain is Prolactin-7B1 (Prl7b1) from Mus musculus (Mouse).